Consider the following 138-residue polypeptide: Transcription antitermination protein NusB (138 aa).

Belongs to the NusB family.

Involved in transcription antitermination. Required for transcription of ribosomal RNA (rRNA) genes. Binds specifically to the boxA antiterminator sequence of the ribosomal RNA (rrn) operons. The chain is Transcription antitermination protein NusB from Helicobacter pylori (strain P12).